Reading from the N-terminus, the 2514-residue chain is Probable polyketide synthase 8/35 (2514 aa).

The Ketosynthase family 3 (KS3) domain maps to 11–442 (DKGVAIVGVG…GSNCCLLISE (432 aa)). Active-site for beta-ketoacyl synthase activity residues include Cys-181, His-323, and His-362. The segment at 635–668 (GVNPSFILGHSLGEISAAYCSGMIDLDTFCYTVY) is acyl/malonyl transferase. Residue Ser-645 is the For acyl/malonyl transferase activity of the active site. Residues 925–1047 (IDHLGLSNSY…ANFQLLDHGN (123 aa)) are N-terminal hotdog fold. The region spanning 925 to 1209 (IDHLGLSNSY…FKSLIPIKHS (285 aa)) is the PKS/mFAS DH domain. His-959 acts as the Proton acceptor; for dehydratase activity in catalysis. Positions 1064-1209 (NLSKLTKNEL…FKSLIPIKHS (146 aa)) are C-terminal hotdog fold. The active-site Proton donor; for dehydratase activity is the Asp-1122. Positions 2431-2508 (IGNKNIDELF…ISIKMILNSL (78 aa)) constitute a Carrier domain. Ser-2468 carries the post-translational modification O-(pantetheine 4'-phosphoryl)serine.

It depends on pantetheine 4'-phosphate as a cofactor.

Its function is as follows. Probable polyketide synthase. This chain is Probable polyketide synthase 8/35 (pks8), found in Dictyostelium discoideum (Social amoeba).